Reading from the N-terminus, the 208-residue chain is uncharacterized protein (208 aa).

This is an uncharacterized protein from Ureaplasma parvum serovar 3 (strain ATCC 700970).